A 100-amino-acid chain; its full sequence is Apolipoprotein C-II (100 aa).

The N-terminal stretch at methionine 1–alanine 22 is a signal peptide. Residues serine 66–methionine 74 form a lipid binding region. A lipoprotein lipase cofactor region spans residues serine 78–glutamate 100.

Belongs to the apolipoprotein C2 family. Post-translationally, proapolipoprotein C-II is synthesized as a sialic acid containing glycoprotein which is subsequently desialylated prior to its proteolytic processing. Proapolipoprotein C-II, the major form found in plasma undergoes proteolytic cleavage of its N-terminal hexapeptide to generate the mature form apolipoprotein C-II, which occurs as the minor form in plasma.

Its subcellular location is the secreted. Component of chylomicrons, very low-density lipoproteins (VLDL), low-density lipoproteins (LDL), and high-density lipoproteins (HDL) in plasma. Plays an important role in lipoprotein metabolism as an activator of lipoprotein lipase. The chain is Apolipoprotein C-II (APOC2) from Ellobius talpinus (Northern mole vole).